Here is a 406-residue protein sequence, read N- to C-terminus: Putative F-box protein At5g38270 (406 aa).

Positions 20–67 constitute an F-box domain; it reads HDWSKLCPDILRSILESLSSTDFHRAKTVCSDWYSNWKTCVKPLCPWR.

The sequence is that of Putative F-box protein At5g38270 from Arabidopsis thaliana (Mouse-ear cress).